A 287-amino-acid polypeptide reads, in one-letter code: NAD kinase (287 aa).

The active-site Proton acceptor is the Asp-56. Residues 56 to 57 (DG), Arg-61, 128 to 129 (ND), and Asp-156 contribute to the NAD(+) site.

The protein belongs to the NAD kinase family. It depends on a divalent metal cation as a cofactor.

It is found in the cytoplasm. It carries out the reaction NAD(+) + ATP = ADP + NADP(+) + H(+). In terms of biological role, involved in the regulation of the intracellular balance of NAD and NADP, and is a key enzyme in the biosynthesis of NADP. Catalyzes specifically the phosphorylation on 2'-hydroxyl of the adenosine moiety of NAD to yield NADP. The sequence is that of NAD kinase from Thermomicrobium roseum (strain ATCC 27502 / DSM 5159 / P-2).